The following is an 80-amino-acid chain: Small ribosomal subunit protein bS21 (80 aa).

The protein belongs to the bacterial ribosomal protein bS21 family.

The protein is Small ribosomal subunit protein bS21 of Rhodospirillum rubrum (strain ATCC 11170 / ATH 1.1.1 / DSM 467 / LMG 4362 / NCIMB 8255 / S1).